Here is a 483-residue protein sequence, read N- to C-terminus: Iron-sulfur cluster assembly SufBD family protein ycf24 (483 aa).

The protein belongs to the iron-sulfur cluster assembly SufBD family.

It is found in the plastid. The protein localises to the chloroplast. The chain is Iron-sulfur cluster assembly SufBD family protein ycf24 (ycf24) from Guillardia theta (Cryptophyte).